Here is a 131-residue protein sequence, read N- to C-terminus: Large ribosomal subunit protein uL22c (131 aa).

It belongs to the universal ribosomal protein uL22 family. As to quaternary structure, part of the 50S ribosomal subunit.

Its subcellular location is the plastid. In terms of biological role, this protein binds specifically to 23S rRNA. The globular domain of the protein is located near the polypeptide exit tunnel on the outside of the subunit, while an extended beta-hairpin is found that lines the wall of the exit tunnel in the center of the 70S ribosome. The sequence is that of Large ribosomal subunit protein uL22c (rpl22) from Aneura mirabilis (Parasitic liverwort).